A 398-amino-acid chain; its full sequence is Succinate--CoA ligase [ADP-forming] subunit beta (398 aa).

In terms of domain architecture, ATP-grasp spans 9–254; the sequence is KRLLHEYGAP…LSEEDPKEIE (246 aa). Residues Lys-46, 53-55, Glu-109, Ala-112, and Glu-117 contribute to the ATP site; that span reads GRG. Positions 209 and 223 each coordinate Mg(2+). Substrate contacts are provided by residues Asn-274 and 331–333; that span reads GIM.

The protein belongs to the succinate/malate CoA ligase beta subunit family. As to quaternary structure, heterotetramer of two alpha and two beta subunits. It depends on Mg(2+) as a cofactor.

It carries out the reaction succinate + ATP + CoA = succinyl-CoA + ADP + phosphate. It catalyses the reaction GTP + succinate + CoA = succinyl-CoA + GDP + phosphate. The protein operates within carbohydrate metabolism; tricarboxylic acid cycle; succinate from succinyl-CoA (ligase route): step 1/1. In terms of biological role, succinyl-CoA synthetase functions in the citric acid cycle (TCA), coupling the hydrolysis of succinyl-CoA to the synthesis of either ATP or GTP and thus represents the only step of substrate-level phosphorylation in the TCA. The beta subunit provides nucleotide specificity of the enzyme and binds the substrate succinate, while the binding sites for coenzyme A and phosphate are found in the alpha subunit. This chain is Succinate--CoA ligase [ADP-forming] subunit beta, found in Bartonella tribocorum (strain CIP 105476 / IBS 506).